Reading from the N-terminus, the 300-residue chain is tRNA-cytidine(32) 2-sulfurtransferase (300 aa).

The short motif at 57–62 is the PP-loop motif element; that stretch reads SGGKDS. Residues cysteine 132, cysteine 135, and cysteine 223 each coordinate [4Fe-4S] cluster.

This sequence belongs to the TtcA family. In terms of assembly, homodimer. The cofactor is Mg(2+). It depends on [4Fe-4S] cluster as a cofactor.

Its subcellular location is the cytoplasm. The catalysed reaction is cytidine(32) in tRNA + S-sulfanyl-L-cysteinyl-[cysteine desulfurase] + AH2 + ATP = 2-thiocytidine(32) in tRNA + L-cysteinyl-[cysteine desulfurase] + A + AMP + diphosphate + H(+). It functions in the pathway tRNA modification. Catalyzes the ATP-dependent 2-thiolation of cytidine in position 32 of tRNA, to form 2-thiocytidine (s(2)C32). The sulfur atoms are provided by the cysteine/cysteine desulfurase (IscS) system. This Xanthomonas campestris pv. campestris (strain 8004) protein is tRNA-cytidine(32) 2-sulfurtransferase.